A 174-amino-acid chain; its full sequence is Gamma-crystallin A (174 aa).

2 consecutive Beta/gamma crystallin 'Greek key' domains span residues 2-40 (GKITFYEDRGFQGRCYECSSDCPNLQTYFSRCNSIRVDS) and 41-83 (GCWM…RSIP). Residues 84–87 (YTSS) form a connecting peptide region. 2 Beta/gamma crystallin 'Greek key' domains span residues 88–128 (HRIR…HVLE) and 129–171 (GSWV…RRVM).

The protein belongs to the beta/gamma-crystallin family.

Crystallins are the dominant structural components of the vertebrate eye lens. The sequence is that of Gamma-crystallin A (Cryga) from Rattus norvegicus (Rat).